The following is a 280-amino-acid chain: Vitamin B12-binding protein (280 aa).

A signal peptide spans 1–27 (MMPLGLFPLPRAAAVLLISLLTLPAQA). A Fe/B12 periplasmic-binding domain is found at 30–277 (RVISLSPSTT…QMASIPTPVA (248 aa)). Y57 contributes to the cyanocob(III)alamin binding site. C190 and C266 are joined by a disulfide.

This sequence belongs to the BtuF family. In terms of assembly, the complex is composed of two ATP-binding proteins (BtuD), two transmembrane proteins (BtuC) and a solute-binding protein (BtuF).

It is found in the periplasm. Functionally, part of the ABC transporter complex BtuCDF involved in vitamin B12 import. Binds vitamin B12 and delivers it to the periplasmic surface of BtuC. The chain is Vitamin B12-binding protein from Yersinia pseudotuberculosis serotype O:3 (strain YPIII).